The following is a 490-amino-acid chain: Cytochrome P450 monooxygenase aclL (490 aa).

Residues 1–21 (MLFSLGPLTIVYGLVIFVVAK) form a helical membrane-spanning segment. Residue asparagine 176 is glycosylated (N-linked (GlcNAc...) asparagine). Cysteine 434 contributes to the heme binding site.

It belongs to the cytochrome P450 family. The cofactor is heme.

The protein localises to the membrane. The protein operates within mycotoxin biosynthesis. Its function is as follows. Cytochrome P450 monooxygenase; part of the gene cluster that mediates the biosynthesis of aspirochlorine (or antibiotic A30641), an unusual halogenated spiro compound with distinctive antifungal properties due to selective inhibition of protein biosynthesis, and which is also active against bacteria, viruses, and murine tumor cells. The non-ribosomal peptide synthetase (NRPS) aclP is responsible the formation of the diketopiperazine (DKP) core from the condensation of 2 phenylalanine residues. One Phe residue is tailored into chlorotyrosine by hydroxylation and chlorination, whereas the second Phe undergoes an unprecedented C-C bond cleavage to be converted into glycine. After formation of the DKP, sulfur is incorporated into the DKP by conjugation with glutathione by aclG, followed by its stepwise degradation to the thiol by aclI, aclJ and aclK, and the dithiol oxidation by aclT. In addition, oxygenases (aclB, aclC, aclL and aclO) and O-methyltransferases (aclM and aclU) act as tailoring enzymes to produce the intermediate dechloroaspirochlorine. Ultimately, chlorination of dechloroaspirochlorine by the halogenase aclH is the last step in the aspirochlorine pathway. This chain is Cytochrome P450 monooxygenase aclL, found in Aspergillus oryzae (strain ATCC 42149 / RIB 40) (Yellow koji mold).